The sequence spans 334 residues: Glycerol-3-phosphate dehydrogenase [NAD(P)+] (334 aa).

NADPH-binding residues include W13, R33, and K106. Positions 106, 137, and 139 each coordinate sn-glycerol 3-phosphate. A141 serves as a coordination point for NADPH. Residues K192, D245, S255, R256, and N257 each contribute to the sn-glycerol 3-phosphate site. K192 serves as the catalytic Proton acceptor. R256 is an NADPH binding site. Positions 280 and 282 each coordinate NADPH.

This sequence belongs to the NAD-dependent glycerol-3-phosphate dehydrogenase family.

The protein localises to the cytoplasm. It carries out the reaction sn-glycerol 3-phosphate + NAD(+) = dihydroxyacetone phosphate + NADH + H(+). It catalyses the reaction sn-glycerol 3-phosphate + NADP(+) = dihydroxyacetone phosphate + NADPH + H(+). The protein operates within membrane lipid metabolism; glycerophospholipid metabolism. In terms of biological role, catalyzes the reduction of the glycolytic intermediate dihydroxyacetone phosphate (DHAP) to sn-glycerol 3-phosphate (G3P), the key precursor for phospholipid synthesis. The chain is Glycerol-3-phosphate dehydrogenase [NAD(P)+] from Chlamydia trachomatis serovar L2b (strain UCH-1/proctitis).